We begin with the raw amino-acid sequence, 62 residues long: Metallothionein-4 (62 aa).

A divalent metal cation contacts are provided by Cys-6, Cys-8, Cys-14, Cys-16, Cys-20, Cys-22, Cys-25, Cys-27, Cys-30, Cys-34, Cys-35, Cys-37, Cys-38, Cys-42, Cys-45, Cys-49, Cys-51, Cys-58, Cys-60, and Cys-61.

The protein belongs to the metallothionein superfamily. Type 1 family.

Functionally, seems to bind zinc and copper. Could play a special role in regulating zinc metabolism during the differentiation of stratified epithelia. The polypeptide is Metallothionein-4 (MT4) (Canis lupus familiaris (Dog)).